Here is a 478-residue protein sequence, read N- to C-terminus: RNA-binding protein 42 (478 aa).

Low complexity predominate over residues 1-20; sequence MASAMAGAGPAPGLPVAGGP. The interval 1–33 is disordered; the sequence is MASAMAGAGPAPGLPVAGGPVVPGPGVGIPGKS. Position 2 is an N-acetylalanine (Ala2). Ser133 carries the post-translational modification Phosphoserine. Asymmetric dimethylarginine is present on residues Arg151, Arg156, Arg166, and Arg179. Disordered stretches follow at residues 171–209 and 317–354; these read LSSA…PPMA and SLRP…PEKL. The segment covering 193–205 has biased composition (pro residues); sequence PPLPGPPGPPMML. Residues 234–478 form a necessary for interaction with HNRNPK region; sequence DLGLGLGLGL…QKEKKKLGLR (245 aa). Positions 343–354 are enriched in basic and acidic residues; the sequence is GEDKKKGKPEKL. Residues 379 to 457 enclose the RRM domain; that stretch reads FRIFCGDLGN…RPIKLRKSMW (79 aa).

The protein belongs to the RRM RBM42 family. Interacts with HNRNPK.

It localises to the nucleus. It is found in the cytoplasm. In terms of biological role, binds (via the RRM domain) to the 3' untranslated region (UTR) of p21 mRNA. In Rattus norvegicus (Rat), this protein is RNA-binding protein 42 (Rbm42).